The primary structure comprises 850 residues: Pro-neuregulin-2, membrane-bound isoform (850 aa).

The tract at residues 1–96 (MRQVCCSALP…AAAAGGMRRD (96 aa)) is disordered. Residues 1–111 (MRQVCCSALP…SMLLFGVSLA (111 aa)) constitute a propeptide that is removed on maturation. Positions 20 to 59 (SSYSDSSSSSSERSSSSSSSSSESGSSSRSSSNNSSISRP) are enriched in low complexity. Residues N52 and N53 are each glycosylated (N-linked (GlcNAc...) asparagine). A compositionally biased stretch (pro residues) spans 60–74 (AAPPEPRPQQQPQPR). Residues 75 to 92 (SPAARRAAARSRAAAAGG) show a composition bias toward low complexity. Residues 112–405 (CYSPSLKSVQ…QKAEELYQKR (294 aa)) are Extracellular-facing. N147, N278, and N346 each carry an N-linked (GlcNAc...) asparagine glycan. One can recognise an Ig-like C2-type domain in the interval 237-332 (PKLKKMKSQT…RGRLYVNSVS (96 aa)). Cystine bridges form between C257-C311, C345-C359, C353-C370, and C372-C381. One can recognise an EGF-like domain in the interval 341–382 (HARKCNETAKSYCVNGGVCYYIEGINQLSCKCPNGFFGQRCL). A helical transmembrane segment spans residues 406 to 426 (VLTITGICVALLVVGIVCVVA). At 427–850 (YCKTKKQRKQ…PRAKQDSAPL (424 aa)) the chain is on the cytoplasmic side. Disordered regions lie at residues 492-535 (TFSG…DSQS), 566-585 (EERR…SLRD), 647-681 (LLRH…YYPA), 700-788 (LPAS…DGAL), and 801-850 (AHDA…SAPL). Positions 494–506 (SGSHSCSPSHHCS) are enriched in low complexity. The span at 514–527 (HRHESHTWSLERSE) shows a compositional bias: basic and acidic residues. Residues 651–665 (PAPPGPGPGPGPGPG) show a composition bias toward pro residues. Low complexity predominate over residues 750-767 (GLAAQRARAARDSLSLSS).

The protein belongs to the neuregulin family. As to quaternary structure, interacts with ERBB3 and ERBB4. Proteolytic cleavage close to the plasma membrane on the external face leads to the release of the soluble growth factor form. In terms of processing, extensive glycosylation precedes the proteolytic cleavage. Restricted to the cerebellum in the adult.

The protein resides in the cell membrane. It is found in the secreted. In terms of biological role, direct ligand for ERBB3 and ERBB4 tyrosine kinase receptors. Concomitantly recruits ERBB1 and ERBB2 coreceptors, resulting in ligand-stimulated tyrosine phosphorylation and activation of the ERBB receptors. May also promote the heterodimerization with the EGF receptor. The chain is Pro-neuregulin-2, membrane-bound isoform (NRG2) from Homo sapiens (Human).